A 215-amino-acid chain; its full sequence is Fibroblast growth factor 17 (215 aa).

The first 22 residues, 1-22, serve as a signal peptide directing secretion; sequence MYGINQRYLYISFHFFVVWCHA. N-linked (GlcNAc...) asparagine glycosylation is present at asparagine 137.

It belongs to the heparin-binding growth factors family.

Its subcellular location is the secreted. Its function is as follows. Involved in dorsal-ventral embryonic patterning, by promoting expression of bone morphogenetic protein (BMP) antagonists such as chd. Also involved in anterior-posterior neural patterning and in mesoderm induction. The chain is Fibroblast growth factor 17 (fgf17) from Danio rerio (Zebrafish).